A 206-amino-acid chain; its full sequence is ATP-dependent Clp protease proteolytic subunit (206 aa).

The Nucleophile role is filled by serine 108. Residue histidine 133 is part of the active site.

It belongs to the peptidase S14 family. As to quaternary structure, fourteen ClpP subunits assemble into 2 heptameric rings which stack back to back to give a disk-like structure with a central cavity, resembling the structure of eukaryotic proteasomes.

It is found in the cytoplasm. It catalyses the reaction Hydrolysis of proteins to small peptides in the presence of ATP and magnesium. alpha-casein is the usual test substrate. In the absence of ATP, only oligopeptides shorter than five residues are hydrolyzed (such as succinyl-Leu-Tyr-|-NHMec, and Leu-Tyr-Leu-|-Tyr-Trp, in which cleavage of the -Tyr-|-Leu- and -Tyr-|-Trp bonds also occurs).. Functionally, cleaves peptides in various proteins in a process that requires ATP hydrolysis. Has a chymotrypsin-like activity. Plays a major role in the degradation of misfolded proteins. The chain is ATP-dependent Clp protease proteolytic subunit from Chromohalobacter salexigens (strain ATCC BAA-138 / DSM 3043 / CIP 106854 / NCIMB 13768 / 1H11).